The sequence spans 308 residues: Very-long-chain enoyl-CoA reductase (308 aa).

At 1–86 the chain is on the cytoplasmic side; the sequence is MKHYEVEIRD…YFRDLGAQIS (86 aa). Lys22 is modified (N6-acetyllysine). Ser58 is modified (phosphoserine). The residue at position 60 (Lys60) is an N6-acetyllysine. The chain crosses the membrane as a helical span at residues 87–106; that stretch reads WVTVFLTEYAGPLFIYLLFY. Residues 107-124 are Lumenal-facing; sequence FRVPFIYGRKYDFTSSRH. Residues 125–147 form a helical membrane-spanning segment; sequence TVVHLACMCHSFHYIKRLLETLF. At 148 to 158 the chain is on the cytoplasmic side; that stretch reads VHRFSHGTMPL. A helical membrane pass occupies residues 159–180; that stretch reads RNIFKNCTYYWGFAAWMAYYIN. Residues 181–189 are Lumenal-facing; the sequence is HPLYTPPTY. Residues 190–216 form a helical membrane-spanning segment; it reads GVQQVKLALAVFVICQLGNFSIHMALR. Over 217-245 the chain is Cytoplasmic; that stretch reads DLRPAGSKTRKIPYPTKNPFTWLFLLVSC. The helical transmembrane segment at 246-262 threads the bilayer; that stretch reads PNYTYEVGSWIGFAILT. Residues 263–264 are Lumenal-facing; the sequence is QC. A helical membrane pass occupies residues 265–292; it reads VPVALFSLVGFTQMTIWAKGKHRSYLKE. Residues 293–308 lie on the Cytoplasmic side of the membrane; it reads FRDYPPLRMPIIPFLL.

Belongs to the steroid 5-alpha reductase family. Interacts with ELOVL1 and LASS2. Glycosylated.

The protein localises to the endoplasmic reticulum membrane. It catalyses the reaction a very-long-chain 2,3-saturated fatty acyl-CoA + NADP(+) = a very-long-chain (2E)-enoyl-CoA + NADPH + H(+). It carries out the reaction octadecanoyl-CoA + NADP(+) = (2E)-octadecenoyl-CoA + NADPH + H(+). The catalysed reaction is (2E,7Z,10Z,13Z,16Z)-docosapentaenoyl-CoA + NADPH + H(+) = (7Z,10Z,13Z,16Z)-docosatetraenoyl-CoA + NADP(+). The enzyme catalyses (2E,7Z,10Z,13Z,16Z,19Z)-docosahexaenoyl-CoA + NADPH + H(+) = (7Z,10Z,13Z,16Z,19Z)-docosapentaenoyl-CoA + NADP(+). It catalyses the reaction (2E,8Z,11Z,14Z)-eicosatetraenoyl-CoA + NADPH + H(+) = (8Z,11Z,14Z)-eicosatrienoyl-CoA + NADP(+). It carries out the reaction (2E)-hexadecenoyl-CoA + NADPH + H(+) = hexadecanoyl-CoA + NADP(+). It functions in the pathway lipid metabolism; fatty acid biosynthesis. It participates in lipid metabolism; sphingolipid metabolism. Its function is as follows. Involved in both the production of very long-chain fatty acids for sphingolipid synthesis and the degradation of the sphingosine moiety in sphingolipids through the sphingosine 1-phosphate metabolic pathway. Catalyzes the last of the four reactions of the long-chain fatty acids elongation cycle. This endoplasmic reticulum-bound enzymatic process, allows the addition of 2 carbons to the chain of long- and very long-chain fatty acids/VLCFAs per cycle. This enzyme reduces the trans-2,3-enoyl-CoA fatty acid intermediate to an acyl-CoA that can be further elongated by entering a new cycle of elongation. Thereby, it participates in the production of VLCFAs of different chain lengths that are involved in multiple biological processes as precursors of membrane lipids and lipid mediators. Catalyzes the saturation step of the sphingosine 1-phosphate metabolic pathway, the conversion of trans-2-hexadecenoyl-CoA to palmitoyl-CoA. In Mus musculus (Mouse), this protein is Very-long-chain enoyl-CoA reductase (Tecr).